A 217-amino-acid chain; its full sequence is Orotidine 5'-phosphate decarboxylase (217 aa).

Substrate contacts are provided by residues aspartate 14, lysine 36, 64 to 73, serine 120, 172 to 182, glycine 197, and arginine 198; these read DFKVADIPST and PGVGAQGGNLS. The active-site Proton donor is the lysine 66.

It belongs to the OMP decarboxylase family. Type 1 subfamily. Homodimer.

The catalysed reaction is orotidine 5'-phosphate + H(+) = UMP + CO2. It functions in the pathway pyrimidine metabolism; UMP biosynthesis via de novo pathway; UMP from orotate: step 2/2. Its function is as follows. Catalyzes the decarboxylation of orotidine 5'-monophosphate (OMP) to uridine 5'-monophosphate (UMP). This is Orotidine 5'-phosphate decarboxylase from Methanococcus maripaludis (strain DSM 14266 / JCM 13030 / NBRC 101832 / S2 / LL).